Reading from the N-terminus, the 307-residue chain is S-methyl-5'-thioadenosine phosphorylase (307 aa).

Phosphate is bound by residues serine 16, 59–60 (RH), and 92–93 (SA). Methionine 198 provides a ligand contact to substrate. Serine 199 provides a ligand contact to phosphate. 222-224 (DYD) provides a ligand contact to substrate.

The protein belongs to the PNP/MTAP phosphorylase family. MTAP subfamily. In terms of assembly, homotrimer.

Its subcellular location is the cytoplasm. It localises to the nucleus. The enzyme catalyses S-methyl-5'-thioadenosine + phosphate = 5-(methylsulfanyl)-alpha-D-ribose 1-phosphate + adenine. It participates in amino-acid biosynthesis; L-methionine biosynthesis via salvage pathway; S-methyl-5-thio-alpha-D-ribose 1-phosphate from S-methyl-5'-thioadenosine (phosphorylase route): step 1/1. Catalyzes the reversible phosphorylation of S-methyl-5'-thioadenosine (MTA) to adenine and 5-methylthioribose-1-phosphate. Involved in the breakdown of MTA, a major by-product of polyamine biosynthesis. Responsible for the first step in the methionine salvage pathway after MTA has been generated from S-adenosylmethionine. Has broad substrate specificity with 6-aminopurine nucleosides as preferred substrates. The sequence is that of S-methyl-5'-thioadenosine phosphorylase from Schizosaccharomyces pombe (strain 972 / ATCC 24843) (Fission yeast).